A 502-amino-acid polypeptide reads, in one-letter code: uncharacterized protein (502 aa).

Low complexity-rich tracts occupy residues 1 to 10 (MQSTTNNNTN), 28 to 47 (SNRS…NNLS), and 155 to 171 (NTED…SVNS). Disordered stretches follow at residues 1 to 57 (MQST…VISY), 155 to 181 (NTED…LSAR), 212 to 362 (SLGN…TDKF), and 438 to 487 (TIDQ…TSNL). The segment covering 212–230 (SLGNSERNSPDRPSTQGDS) has biased composition (polar residues). Composition is skewed to low complexity over residues 242-290 (RNAS…SSRN) and 309-327 (SNKN…TSIK). The segment covering 339–348 (QTNKSKNQRG) has biased composition (polar residues). The segment covering 446-460 (TSDKNNSTKSNTKYN) has biased composition (low complexity). A compositionally biased stretch (polar residues) spans 470–487 (SYGTSKRSHNRSSNTSNL).

Its subcellular location is the virion. This is an uncharacterized protein from Acanthamoeba polyphaga (Amoeba).